Reading from the N-terminus, the 393-residue chain is Lipid-A-disaccharide synthase (393 aa).

The protein belongs to the LpxB family.

It carries out the reaction a lipid X + a UDP-2-N,3-O-bis[(3R)-3-hydroxyacyl]-alpha-D-glucosamine = a lipid A disaccharide + UDP + H(+). It functions in the pathway bacterial outer membrane biogenesis; LPS lipid A biosynthesis. In terms of biological role, condensation of UDP-2,3-diacylglucosamine and 2,3-diacylglucosamine-1-phosphate to form lipid A disaccharide, a precursor of lipid A, a phosphorylated glycolipid that anchors the lipopolysaccharide to the outer membrane of the cell. In Actinobacillus pleuropneumoniae serotype 5b (strain L20), this protein is Lipid-A-disaccharide synthase.